The following is a 190-amino-acid chain: Interferon alpha-7 (190 aa).

The first 23 residues, 1 to 23 (MARLCAFLMVLAVMSYWPTCCLG), serve as a signal peptide directing secretion. 2 disulfides stabilise this stretch: C24–C122 and C52–C162. An N-linked (GlcNAc...) asparagine glycan is attached at N101.

This sequence belongs to the alpha/beta interferon family.

Its subcellular location is the secreted. Functionally, produced by macrophages, IFN-alpha have antiviral activities. Interferon stimulates the production of two enzymes: a protein kinase and an oligoadenylate synthetase. The sequence is that of Interferon alpha-7 (Ifna7) from Mus musculus (Mouse).